A 114-amino-acid chain; its full sequence is Histone H3-7 (114 aa).

Basic residues predominate over residues 1 to 17 (NTGGKAPRKHIAHKQAK). Residues 1–32 (NTGGKAPRKHIAHKQAKKSSAAAATGGVKKPH) form a disordered region. Over residues 18-28 (KSSAAAATGGV) the composition is skewed to low complexity.

The protein belongs to the histone H3 family. In terms of assembly, the nucleosome is a histone octamer containing two molecules each of H2A, H2B, H3 and H4 assembled in one H3-H4 heterotetramer and two H2A-H2B heterodimers. The octamer wraps approximately 147 bp of DNA.

Its subcellular location is the nucleus. It is found in the chromosome. Its function is as follows. Core component of nucleosome. Nucleosomes wrap and compact DNA into chromatin, limiting DNA accessibility to the cellular machineries which require DNA as a template. Histones thereby play a central role in transcription regulation, DNA repair, DNA replication and chromosomal stability. DNA accessibility is regulated via a complex set of post-translational modifications of histones, also called histone code, and nucleosome remodeling. This Stylonychia lemnae (Ciliate) protein is Histone H3-7 (H3-7).